The chain runs to 331 residues: Ribosomal RNA small subunit methyltransferase H (331 aa).

S-adenosyl-L-methionine-binding positions include 38 to 40 (GGY), aspartate 56, phenylalanine 83, aspartate 100, and glutamine 107. The segment at 287–331 (DEAELAENPRARSARLRVGVRTDAPAGKVDPQALGTPLIPKKGRR) is disordered.

It belongs to the methyltransferase superfamily. RsmH family.

It is found in the cytoplasm. It carries out the reaction cytidine(1402) in 16S rRNA + S-adenosyl-L-methionine = N(4)-methylcytidine(1402) in 16S rRNA + S-adenosyl-L-homocysteine + H(+). Specifically methylates the N4 position of cytidine in position 1402 (C1402) of 16S rRNA. The polypeptide is Ribosomal RNA small subunit methyltransferase H (Cereibacter sphaeroides (strain KD131 / KCTC 12085) (Rhodobacter sphaeroides)).